Here is a 50-residue protein sequence, read N- to C-terminus: MLDLNITKLVTTVVIIAACCLFYLLALDSYCDQGGTFSTGICAITTIVPW.

Topologically, residues 1 to 4 (MLDL) are cytoplasmic. A helical transmembrane segment spans residues 5–27 (NITKLVTTVVIIAACCLFYLLAL). The Periplasmic portion of the chain corresponds to 28-50 (DSYCDQGGTFSTGICAITTIVPW).

Belongs to the MgrB family. Probably interacts with the periplasmic domain of PhoQ.

It is found in the cell inner membrane. In terms of biological role, phoP-regulated transcription is redox-sensitive, being activated when the periplasm becomes more reducing. MgrB acts between DsbA/DsbB and PhoP/PhoQ in this pathway. Represses PhoP/PhoQ signaling, possibly by binding to the periplasmic domain of PhoQ, altering its activity and that of downstream effector PhoP. This Yersinia pestis protein is PhoP/PhoQ regulator MgrB.